A 166-amino-acid chain; its full sequence is Large ribosomal subunit protein uL10 (166 aa).

This sequence belongs to the universal ribosomal protein uL10 family. In terms of assembly, part of the ribosomal stalk of the 50S ribosomal subunit. The N-terminus interacts with L11 and the large rRNA to form the base of the stalk. The C-terminus forms an elongated spine to which L12 dimers bind in a sequential fashion forming a multimeric L10(L12)X complex.

Forms part of the ribosomal stalk, playing a central role in the interaction of the ribosome with GTP-bound translation factors. This is Large ribosomal subunit protein uL10 from Alkaliphilus metalliredigens (strain QYMF).